The following is a 149-amino-acid chain: Urease accessory protein UreE (149 aa).

This sequence belongs to the UreE family.

Its subcellular location is the cytoplasm. Its function is as follows. Involved in urease metallocenter assembly. Binds nickel. Probably functions as a nickel donor during metallocenter assembly. In Prochlorococcus marinus (strain MIT 9215), this protein is Urease accessory protein UreE.